A 155-amino-acid polypeptide reads, in one-letter code: Small ribosomal subunit protein uS7cz/uS7cy (155 aa).

This sequence belongs to the universal ribosomal protein uS7 family. As to quaternary structure, part of the 30S ribosomal subunit.

The protein localises to the plastid. It is found in the chloroplast. One of the primary rRNA binding proteins, it binds directly to 16S rRNA where it nucleates assembly of the head domain of the 30S subunit. The sequence is that of Small ribosomal subunit protein uS7cz/uS7cy (rps7-A) from Psilotum nudum (Whisk fern).